Here is a 123-residue protein sequence, read N- to C-terminus: Small ribosomal subunit protein uS12 (123 aa).

3-methylthioaspartic acid is present on aspartate 89.

Belongs to the universal ribosomal protein uS12 family. Part of the 30S ribosomal subunit. Contacts proteins S8 and S17. May interact with IF1 in the 30S initiation complex.

Its function is as follows. With S4 and S5 plays an important role in translational accuracy. In terms of biological role, interacts with and stabilizes bases of the 16S rRNA that are involved in tRNA selection in the A site and with the mRNA backbone. Located at the interface of the 30S and 50S subunits, it traverses the body of the 30S subunit contacting proteins on the other side and probably holding the rRNA structure together. The combined cluster of proteins S8, S12 and S17 appears to hold together the shoulder and platform of the 30S subunit. This chain is Small ribosomal subunit protein uS12, found in Nitrobacter hamburgensis (strain DSM 10229 / NCIMB 13809 / X14).